A 248-amino-acid chain; its full sequence is PF03932 family protein CutC (248 aa).

Belongs to the CutC family. In terms of assembly, homodimer.

The protein resides in the cytoplasm. In Salmonella enteritidis PT4 (strain P125109), this protein is PF03932 family protein CutC.